Reading from the N-terminus, the 117-residue chain is Large ribosomal subunit protein bL17 (117 aa).

The protein belongs to the bacterial ribosomal protein bL17 family. In terms of assembly, part of the 50S ribosomal subunit. Contacts protein L32.

This Exiguobacterium sp. (strain ATCC BAA-1283 / AT1b) protein is Large ribosomal subunit protein bL17.